A 123-amino-acid polypeptide reads, in one-letter code: uncharacterized protein (123 aa).

This is an uncharacterized protein from Autographa californica nuclear polyhedrosis virus (AcMNPV).